The primary structure comprises 599 residues: MTELSKIRNFSIVAHIDHGKSTLADRLIQSTGTVQDRDMKEQLLDAMDIERERGITIKANTVRIDYEADDGERYVLNLIDTPGHVDFAYEVSRSMRAVEGSLLVVDSTQGVEAQTLANVYQAIDADHEIVPVLNKIDLPAADCDRVAEQIEDVIGIDATDAIRVSAKTGIGIKDTLEAIVKRLPAPTGERNAPLKAMLVDSWYDAYLGVIVLVRIMDGVLKKGDQIKMMQTNARYGVDRIGVFRPAMQVVDELGPGEIGFITASIKQVRDTKVGDTITHDKKGAETALPGFKPSVPVVFCGLFPVDSSEFEDLRDAIEKLALNDASFSYEMETSAALGFGFRCGFLGLLHLEVIRDRIEREYNIELITTAPSVVYHIFMKDGEMLELHNPADMPDLSKVDHLEEPRIKATILVPDEYLGDVLKLCQDRRGIQQDLSYAGSRAMVVYDLPLNEVVFDFYDRLKSVTKGYASFDYQMIGYRADNLVKMSVLVNDEPVDALSTMVHRDRAEQRGRAMCEKLKDLIPRHMFKIPIQAAIGGKVIARETLSALRKDVTAKCYGGDATRKRKLLEKQKAGKKKMRQFGRVEIPQEAFISALKMDD.

The tr-type G domain occupies 5 to 187; the sequence is SKIRNFSIVA…AIVKRLPAPT (183 aa). GTP is bound by residues 17–22 and 134–137; these read DHGKST and NKID.

This sequence belongs to the TRAFAC class translation factor GTPase superfamily. Classic translation factor GTPase family. LepA subfamily.

The protein localises to the cell inner membrane. The enzyme catalyses GTP + H2O = GDP + phosphate + H(+). In terms of biological role, required for accurate and efficient protein synthesis under certain stress conditions. May act as a fidelity factor of the translation reaction, by catalyzing a one-codon backward translocation of tRNAs on improperly translocated ribosomes. Back-translocation proceeds from a post-translocation (POST) complex to a pre-translocation (PRE) complex, thus giving elongation factor G a second chance to translocate the tRNAs correctly. Binds to ribosomes in a GTP-dependent manner. The polypeptide is Elongation factor 4 (Ruegeria sp. (strain TM1040) (Silicibacter sp.)).